We begin with the raw amino-acid sequence, 793 residues long: Phenylalanine--tRNA ligase beta subunit (793 aa).

A tRNA-binding domain is found at alanine 39 to arginine 148. Residues proline 400–isoleucine 476 form the B5 domain. Residues aspartate 454, aspartate 460, glutamate 463, and glutamate 464 each coordinate Mg(2+). One can recognise an FDX-ACB domain in the interval serine 698 to arginine 791.

The protein belongs to the phenylalanyl-tRNA synthetase beta subunit family. Type 1 subfamily. Tetramer of two alpha and two beta subunits. The cofactor is Mg(2+).

It is found in the cytoplasm. The enzyme catalyses tRNA(Phe) + L-phenylalanine + ATP = L-phenylalanyl-tRNA(Phe) + AMP + diphosphate + H(+). The chain is Phenylalanine--tRNA ligase beta subunit from Acinetobacter baylyi (strain ATCC 33305 / BD413 / ADP1).